The primary structure comprises 263 residues: Probable septum site-determining protein MinC (263 aa).

The segment at 107–159 (LPPSGARERPLDIKDSAPRKPAEEPSPSAGEARPEPAKAEEKPADPVSRPTKV) is disordered. Basic and acidic residues-rich tracts occupy residues 112–129 (ARER…KPAE) and 138–150 (ARPE…EKPA).

Belongs to the MinC family. In terms of assembly, interacts with MinD and FtsZ.

Its function is as follows. Cell division inhibitor that blocks the formation of polar Z ring septums. Rapidly oscillates between the poles of the cell to destabilize FtsZ filaments that have formed before they mature into polar Z rings. Prevents FtsZ polymerization. The chain is Probable septum site-determining protein MinC from Pseudomonas aeruginosa (strain UCBPP-PA14).